Consider the following 424-residue polypeptide: Protein maelstrom 1 (424 aa).

The segment at residues 2-69 (PPKKHSGFMM…LTRVKKERLN (68 aa)) is a DNA-binding region (HMG box).

The protein belongs to the maelstrom family.

It is found in the cytoplasm. The protein localises to the nucleus. Its function is as follows. Involved both in the piRNA and miRNA metabolic processes. As a component of the meiotic nuage, plays a central role during oogenesis by repressing transposable elements and preventing their mobilization, which is essential for the germline integrity. Repression of transposable elements is mediated via the piRNA metabolic process, which mediates the repression of transposable elements during meiosis by forming complexes composed of piRNAs and Piwi proteins and governs the repression of transposons. As a nuclear component, it is required for proper differentiation in the germline stem cell (GSC) lineage by repressing microRNA-7 (miR-7), thereby acting as an indirect regulator of bag-of-marbles (Bam). Acts by binding to the promoter of miR-7 gene and repressing its expression; miR-7 repression alleviates the Bam repression by miR-7, thereby allowing differentiation in the germline stem cell (GSC) lineage. The chain is Protein maelstrom 1 (mael1) from Drosophila ananassae (Fruit fly).